The following is a 619-amino-acid chain: Dihydroxy-acid dehydratase (619 aa).

D81 lines the Mg(2+) pocket. C122 is a [2Fe-2S] cluster binding site. Residues D123 and K124 each contribute to the Mg(2+) site. An N6-carboxylysine modification is found at K124. [2Fe-2S] cluster is bound at residue C195. E494 serves as a coordination point for Mg(2+). Residue S520 is the Proton acceptor of the active site.

The protein belongs to the IlvD/Edd family. As to quaternary structure, homodimer. [2Fe-2S] cluster is required as a cofactor. Mg(2+) serves as cofactor.

The enzyme catalyses (2R)-2,3-dihydroxy-3-methylbutanoate = 3-methyl-2-oxobutanoate + H2O. It carries out the reaction (2R,3R)-2,3-dihydroxy-3-methylpentanoate = (S)-3-methyl-2-oxopentanoate + H2O. It participates in amino-acid biosynthesis; L-isoleucine biosynthesis; L-isoleucine from 2-oxobutanoate: step 3/4. It functions in the pathway amino-acid biosynthesis; L-valine biosynthesis; L-valine from pyruvate: step 3/4. Its function is as follows. Functions in the biosynthesis of branched-chain amino acids. Catalyzes the dehydration of (2R,3R)-2,3-dihydroxy-3-methylpentanoate (2,3-dihydroxy-3-methylvalerate) into 2-oxo-3-methylpentanoate (2-oxo-3-methylvalerate) and of (2R)-2,3-dihydroxy-3-methylbutanoate (2,3-dihydroxyisovalerate) into 2-oxo-3-methylbutanoate (2-oxoisovalerate), the penultimate precursor to L-isoleucine and L-valine, respectively. This Shewanella oneidensis (strain ATCC 700550 / JCM 31522 / CIP 106686 / LMG 19005 / NCIMB 14063 / MR-1) protein is Dihydroxy-acid dehydratase.